Consider the following 371-residue polypeptide: Queuine tRNA-ribosyltransferase (371 aa).

The active-site Proton acceptor is the aspartate 89. Residues 89-93 (DSGGF), aspartate 143, glutamine 185, and glycine 212 contribute to the substrate site. Residues 243 to 249 (GVGKPED) form an RNA binding region. Aspartate 262 (nucleophile) is an active-site residue. The segment at 267-271 (TRNAR) is RNA binding; important for wobble base 34 recognition. 4 residues coordinate Zn(2+): cysteine 300, cysteine 302, cysteine 305, and histidine 331.

The protein belongs to the queuine tRNA-ribosyltransferase family. In terms of assembly, homodimer. Within each dimer, one monomer is responsible for RNA recognition and catalysis, while the other monomer binds to the replacement base PreQ1. Zn(2+) serves as cofactor.

It catalyses the reaction 7-aminomethyl-7-carbaguanine + guanosine(34) in tRNA = 7-aminomethyl-7-carbaguanosine(34) in tRNA + guanine. It participates in tRNA modification; tRNA-queuosine biosynthesis. Catalyzes the base-exchange of a guanine (G) residue with the queuine precursor 7-aminomethyl-7-deazaguanine (PreQ1) at position 34 (anticodon wobble position) in tRNAs with GU(N) anticodons (tRNA-Asp, -Asn, -His and -Tyr). Catalysis occurs through a double-displacement mechanism. The nucleophile active site attacks the C1' of nucleotide 34 to detach the guanine base from the RNA, forming a covalent enzyme-RNA intermediate. The proton acceptor active site deprotonates the incoming PreQ1, allowing a nucleophilic attack on the C1' of the ribose to form the product. After dissociation, two additional enzymatic reactions on the tRNA convert PreQ1 to queuine (Q), resulting in the hypermodified nucleoside queuosine (7-(((4,5-cis-dihydroxy-2-cyclopenten-1-yl)amino)methyl)-7-deazaguanosine). The chain is Queuine tRNA-ribosyltransferase from Thioalkalivibrio sulfidiphilus (strain HL-EbGR7).